Consider the following 661-residue polypeptide: Altered inheritance of mitochondria protein 3-1 (661 aa).

Disordered regions lie at residues T19 to Y99, A116 to N142, Q154 to S194, L263 to S419, R431 to I473, Y487 to N563, and E615 to S661. A compositionally biased stretch (basic and acidic residues) spans K37–T58. Positions P120–N142 are enriched in low complexity. The segment covering L263–Q318 has biased composition (low complexity). 2 stretches are compositionally biased toward polar residues: residues N319–P328 and V356–L371. Over residues T390–V399 the composition is skewed to basic and acidic residues. A compositionally biased stretch (polar residues) spans E406–S419. The span at P434–A447 shows a compositional bias: low complexity. 3 stretches are compositionally biased toward polar residues: residues S458–I473, R512–D533, and R541–R552.

The protein belongs to the AIM3 family.

The protein localises to the membrane raft. This Candida glabrata (strain ATCC 2001 / BCRC 20586 / JCM 3761 / NBRC 0622 / NRRL Y-65 / CBS 138) (Yeast) protein is Altered inheritance of mitochondria protein 3-1 (AIM3-1).